The sequence spans 488 residues: Glutamyl-tRNA(Gln) amidotransferase subunit A (488 aa).

Residues Lys-77 and Ser-152 each act as charge relay system in the active site. Ser-176 (acyl-ester intermediate) is an active-site residue.

This sequence belongs to the amidase family. GatA subfamily. Heterotrimer of A, B and C subunits.

It carries out the reaction L-glutamyl-tRNA(Gln) + L-glutamine + ATP + H2O = L-glutaminyl-tRNA(Gln) + L-glutamate + ADP + phosphate + H(+). Allows the formation of correctly charged Gln-tRNA(Gln) through the transamidation of misacylated Glu-tRNA(Gln) in organisms which lack glutaminyl-tRNA synthetase. The reaction takes place in the presence of glutamine and ATP through an activated gamma-phospho-Glu-tRNA(Gln). This chain is Glutamyl-tRNA(Gln) amidotransferase subunit A, found in Streptococcus pyogenes serotype M18 (strain MGAS8232).